The sequence spans 164 residues: Interferon gamma (164 aa).

Residues 1-19 form the signal peptide; it reads MTCQTYNLFVLSVIMIYYG. Asn42 and Asn61 each carry an N-linked (GlcNAc...) asparagine glycan.

Belongs to the type II (or gamma) interferon family. In terms of assembly, homodimer.

Its subcellular location is the secreted. Functionally, produced by lymphocytes activated by specific antigens or mitogens. IFN-gamma, in addition to having antiviral activity, has important immunoregulatory functions. It is a potent activator of macrophages, it has antiproliferative effects on transformed cells and it can potentiate the antiviral and antitumor effects of the type I interferons. The polypeptide is Interferon gamma (IFNG) (Phasianus colchicus colchicus (Black-necked pheasant)).